A 208-amino-acid chain; its full sequence is FMRFamide-like neuropeptide 18 (208 aa).

Positions 1–21 are cleaved as a signal peptide; it reads MQRWSGVLLISLCCLLRGALA. Positions 22-83 are excised as a propeptide; the sequence is YTEPIYEIVE…VWEKRESSVQ (62 aa). Phenylalanine amide is present on F93. Positions 97-101 are excised as a propeptide; sequence AYFDE. A Phenylalanine amide modification is found at F111. Positions 115-119 are excised as a propeptide; that stretch reads SYFDE. F129 is subject to Phenylalanine amide. A propeptide spanning residues 133-137 is cleaved from the precursor; that stretch reads DVPMD. A Phenylalanine amide modification is found at F147. Residues 151–158 constitute a propeptide that is removed on maturation; sequence DYMADSFD. Phenylalanine amide is present on residues F169 and F180. Positions 184 to 195 are excised as a propeptide; sequence SDLEEHYAGVLL. F205 carries the phenylalanine amide modification.

Belongs to the FARP (FMRFamide related peptide) family. May be processed by convertase egl-3. As to expression, expressed in head neurons and weakly in ventral nerve cord. Expressed in the interneurons AVA, AIY and RIG, the motor neuron RIM and the pharyngeal neurons M2 and M3. EMPGVLRF-amide: Expressed in cholinergic pharyngeal motoneurons M2 and M3.

It localises to the secreted. Functionally, FMRFamide-like neuropeptides. Ligand to G-protein coupled receptor npr-1. Involved in modulating locomotion quiescence during the sleep-like state called lethargus which occurs during molting between larval and adult stages, acting via npr-1. Together with flp-1, plays a homeostatic role by acting on the GABAergic neural transmission at neuromuscular junctions to prevent overexcitation of the locomotor circuit. Plays a role in the navigational capacity of sperm and the targeting of sperm derived from males to the fertilization site in the uterus of hermaphrodites. In terms of biological role, SVPGVLRF-amide: Excites muscle tension. Its function is as follows. Activates the G-protein coupled receptor npr-1 more effectively than other flp-18 peptides. Inhibits the activity of dissected pharyngeal myogenic muscle system. This is FMRFamide-like neuropeptide 18 from Caenorhabditis elegans.